Here is a 1034-residue protein sequence, read N- to C-terminus: MGSKRIIPSRHRSLSTYEVMFTALFAILMVLCAGLIAVSWLTIKGSEKDAALGKSHEARGTMKITSGVTYNPNLQDKLSVDFKVLAFDIQQMIGEIFQSSNLKNEYKNSRVLQFENGSVIVIFDLLFAQWVSDENIKEELIQGIEANKSSQLVAFHIDVNSIDITESLENYSTTSPSTTSDKLTTSSPPATPGNVSIECLPGSRPCADALKCIAVDLFCDGELNCPDGSDEDSKICATACDGKFLLTESSGSFDAAQYPKLSEASVVCQWIIRVNQGLSIELNFSYFNTYSMDVLNIYEGVGSSKILRASLWLMNPGTIRIFSNQVTVTFLIESDENDYIGFNATYTAFNSTELNNDEKINCNFEDGFCFWIQDLNDDNEWERIQGTTFPPFTGPNFDHTFGNASGFYISTPTGPGGRQERVGLLSLPLEPTLEPVCLSFWYYMYGENVYKLSINISNDQNIEKIIFQKEGNYGENWNYGQVTLNETVEFKVAFNAFKNQFLSDIALDDISLTYGICNVSLYPEPTLVPTSPPELPTDCGGPFELWEPNTTFTSMNFPNNYPNQAFCVWNLNAQKGKNIQLHFEEFDLENIADVVEIRDGEEDDSLLLAVYTGPGPVEDVFSTTNRMTVLFITNDALTKGGFKANFTTGYHLGIPEPCKEDNFQCENGECVLLVNLCDGFSHCKDGSDEAHCVRFLNGTANNSGLVQFRIQSIWHTACAENWTTQTSDDVCQLLGLGTGNSSMPFFSSGGGPFVKLNTAPNGSLILTASEQCFEDSLILLQCNHKSCGKKQVAQEVSPKIVGGNDSREGAWPWVVALYYNGQLLCGASLVSRDWLVSAAHCVYGRNLEPSKWKAILGLHMTSNLTSPQIVTRLIDEIVINPHYNRRRKDSDIAMMHLEFKVNYTDYIQPICLPEENQVFPPGRICSIAGWGKVIYQGSPADILQEADVPLLSNEKCQQQMPEYNITENMMCAGYEEGGIDSCQGDSGGPLMCLENNRWLLAGVTSFGYQCALPNRPGVYARVPKFTEWIQSFLH.

The propeptide occupies 1 to 51; sequence MGSKRIIPSRHRSLSTYEVMFTALFAILMVLCAGLIAVSWLTIKGSEKDAA. Residues 2 to 18 lie on the Cytoplasmic side of the membrane; sequence GSKRIIPSRHRSLSTYE. Residues 19-47 form a helical; Signal-anchor for type II membrane protein membrane-spanning segment; that stretch reads VMFTALFAILMVLCAGLIAVSWLTIKGSE. Over 48–1034 the chain is Extracellular; it reads KDAALGKSHE…FTEWIQSFLH (987 aa). An SEA domain is found at 54-169; that stretch reads KSHEARGTMK…NSIDITESLE (116 aa). N-linked (GlcNAc...) asparagine glycosylation is found at N116, N147, N170, and N194. In terms of domain architecture, LDL-receptor class A 1 spans 197–238; it reads IECLPGSRPCADALKCIAVDLFCDGELNCPDGSDEDSKICAT. 4 disulfides stabilise this stretch: C199-C212, C206-C225, C219-C236, and C240-C268. The CUB 1 domain maps to 240–349; that stretch reads CDGKFLLTES…IGFNATYTAF (110 aa). 9 N-linked (GlcNAc...) asparagine glycosylation sites follow: N283, N343, N350, N403, N455, N485, N518, N549, and N645. The MAM domain occupies 357–519; that stretch reads DEKINCNFED…ISLTYGICNV (163 aa). A disulfide bridge links C539 with C567. Positions 539–649 constitute a CUB 2 domain; the sequence is CGGPFELWEP…GGFKANFTTG (111 aa). Positions 656–694 constitute an LDL-receptor class A 2 domain; it reads EPCKEDNFQCENGECVLLVNLCDGFSHCKDGSDEAHCVR. 3 cysteine pairs are disulfide-bonded: C658–C670, C665–C683, and C677–C692. In terms of domain architecture, SRCR spans 693–786; sequence VRFLNGTANN…LILLQCNHKS (94 aa). Residues N697, N701, N721, N740, and N761 are each glycosylated (N-linked (GlcNAc...) asparagine). 6 disulfides stabilise this stretch: C772-C782, C787-C911, C825-C841, C925-C992, C956-C971, and C982-C1010. The Peptidase S1 domain maps to 800–1034; it reads IVGGNDSREG…FTEWIQSFLH (235 aa). N-linked (GlcNAc...) asparagine glycosylation occurs at N804. H840 acts as the Charge relay system in catalysis. N-linked (GlcNAc...) asparagine glycosylation is present at N863. D891 serves as the catalytic Charge relay system. N-linked (GlcNAc...) asparagine glycans are attached at residues N902 and N964. S986 functions as the Charge relay system in the catalytic mechanism.

This sequence belongs to the peptidase S1 family. Heterotrimer of a catalytic (light) chain, a multidomain (heavy) chain, and a mini chain. Post-translationally, the chains are derived from a single precursor that is cleaved by a trypsin-like protease. In terms of processing, the mini chain may be cleaved by elastase.

It localises to the membrane. It catalyses the reaction Activation of trypsinogen by selective cleavage of 6-Lys-|-Ile-7 bond.. In terms of biological role, responsible for initiating activation of pancreatic proteolytic proenzymes (trypsin, chymotrypsin and carboxypeptidase A). It catalyzes the conversion of trypsinogen to trypsin which in turn activates other proenzymes including chymotrypsinogen, procarboxypeptidases, and proelastases. The sequence is that of Enteropeptidase (TMPRSS15) from Sus scrofa (Pig).